A 635-amino-acid polypeptide reads, in one-letter code: Extracellular metalloproteinase MEP (635 aa).

Positions 1–19 (MRYSLSLALLGVAAVTVVA) are cleaved as a signal peptide. The propeptide occupies 20–242 (HPHTPGRHGV…VHGVVDYVSH (223 aa)). His428 contributes to the Zn(2+) binding site. Glu429 is a catalytic residue. His432 contacts Zn(2+). Asn473 is a glycosylation site (N-linked (GlcNAc...) asparagine).

The protein belongs to the peptidase M36 family. Zn(2+) serves as cofactor.

Its subcellular location is the secreted. Its function is as follows. Secreted metalloproteinase that allows assimilation of proteinaceous substrates. In Pyricularia oryzae (strain 70-15 / ATCC MYA-4617 / FGSC 8958) (Rice blast fungus), this protein is Extracellular metalloproteinase MEP (MEP).